The primary structure comprises 430 residues: Pre-mRNA-processing protein 45 (430 aa).

The segment covering 1-26 (MSFRTLSSLLPSPQNSEVSESSAFSR) has biased composition (polar residues). Disordered stretches follow at residues 1-28 (MSFRTLSSLLPSPQNSEVSESSAFSRQS), 280-299 (MERNQRRRAERELERSNKMS), and 370-430 (PTTG…PHTS).

Belongs to the SNW family. In terms of assembly, associated with the spliceosome.

It localises to the nucleus. In terms of biological role, involved in pre-mRNA splicing. This Kluyveromyces lactis (strain ATCC 8585 / CBS 2359 / DSM 70799 / NBRC 1267 / NRRL Y-1140 / WM37) (Yeast) protein is Pre-mRNA-processing protein 45 (PRP45).